Here is a 393-residue protein sequence, read N- to C-terminus: Formate-dependent phosphoribosylglycinamide formyltransferase (393 aa).

Residues 22–23 (EL) and E82 contribute to the N(1)-(5-phospho-beta-D-ribosyl)glycinamide site. ATP is bound by residues R114, K155, 160–165 (SSGKGQ), 195–198 (EGFV), and E203. In terms of domain architecture, ATP-grasp spans 119-308 (RLAAEELGLP…EFALHVRAIL (190 aa)). E267 and E279 together coordinate Mg(2+). Residues D286, K356, and 363–364 (RR) contribute to the N(1)-(5-phospho-beta-D-ribosyl)glycinamide site.

The protein belongs to the PurK/PurT family. As to quaternary structure, homodimer.

The catalysed reaction is N(1)-(5-phospho-beta-D-ribosyl)glycinamide + formate + ATP = N(2)-formyl-N(1)-(5-phospho-beta-D-ribosyl)glycinamide + ADP + phosphate + H(+). The protein operates within purine metabolism; IMP biosynthesis via de novo pathway; N(2)-formyl-N(1)-(5-phospho-D-ribosyl)glycinamide from N(1)-(5-phospho-D-ribosyl)glycinamide (formate route): step 1/1. Involved in the de novo purine biosynthesis. Catalyzes the transfer of formate to 5-phospho-ribosyl-glycinamide (GAR), producing 5-phospho-ribosyl-N-formylglycinamide (FGAR). Formate is provided by PurU via hydrolysis of 10-formyl-tetrahydrofolate. The sequence is that of Formate-dependent phosphoribosylglycinamide formyltransferase from Nitratidesulfovibrio vulgaris (strain ATCC 29579 / DSM 644 / CCUG 34227 / NCIMB 8303 / VKM B-1760 / Hildenborough) (Desulfovibrio vulgaris).